The primary structure comprises 291 residues: Tyrosine recombinase XerD (291 aa).

Positions 1-82 (MEEGLIDRLL…ACKRLYIWME (82 aa)) constitute a Core-binding (CB) domain. Residues 103-285 (NIPTLITEQQ…ANVWLQGVVK (183 aa)) form the Tyr recombinase domain. Residues Arg143, Lys167, His237, Arg240, and His263 contribute to the active site. Tyr272 (O-(3'-phospho-DNA)-tyrosine intermediate) is an active-site residue.

The protein belongs to the 'phage' integrase family. XerD subfamily. Forms a cyclic heterotetrameric complex composed of two molecules of XerC and two molecules of XerD.

The protein resides in the cytoplasm. Its function is as follows. Site-specific tyrosine recombinase, which acts by catalyzing the cutting and rejoining of the recombining DNA molecules. The XerC-XerD complex is essential to convert dimers of the bacterial chromosome into monomers to permit their segregation at cell division. It also contributes to the segregational stability of plasmids. This Neisseria meningitidis serogroup A / serotype 4A (strain DSM 15465 / Z2491) protein is Tyrosine recombinase XerD.